Here is a 286-residue protein sequence, read N- to C-terminus: Elongation factor Ts (286 aa).

The tract at residues 82 to 85 (TDFV) is involved in Mg(2+) ion dislocation from EF-Tu.

This sequence belongs to the EF-Ts family.

It is found in the cytoplasm. In terms of biological role, associates with the EF-Tu.GDP complex and induces the exchange of GDP to GTP. It remains bound to the aminoacyl-tRNA.EF-Tu.GTP complex up to the GTP hydrolysis stage on the ribosome. The chain is Elongation factor Ts from Hahella chejuensis (strain KCTC 2396).